Reading from the N-terminus, the 498-residue chain is Glycerol kinase (498 aa).

An ADP-binding site is contributed by threonine 13. Positions 13, 14, and 15 each coordinate ATP. Threonine 13 is a binding site for sn-glycerol 3-phosphate. Arginine 17 provides a ligand contact to ADP. 4 residues coordinate sn-glycerol 3-phosphate: arginine 83, glutamate 84, tyrosine 135, and aspartate 244. Glycerol-binding residues include arginine 83, glutamate 84, tyrosine 135, aspartate 244, and glutamine 245. ADP is bound by residues threonine 266 and glycine 309. Positions 266, 309, 313, and 410 each coordinate ATP. Glycine 410 and asparagine 414 together coordinate ADP.

It belongs to the FGGY kinase family.

It carries out the reaction glycerol + ATP = sn-glycerol 3-phosphate + ADP + H(+). Its pathway is polyol metabolism; glycerol degradation via glycerol kinase pathway; sn-glycerol 3-phosphate from glycerol: step 1/1. Its activity is regulated as follows. Inhibited by fructose 1,6-bisphosphate (FBP). Key enzyme in the regulation of glycerol uptake and metabolism. Catalyzes the phosphorylation of glycerol to yield sn-glycerol 3-phosphate. This chain is Glycerol kinase, found in Koribacter versatilis (strain Ellin345).